The chain runs to 947 residues: Cell adhesion molecule CEACAM5 (947 aa).

Positions 1–34 (MEASSVLPCKWCTHLQGLLLTASFLTCCHLPTTA) are cleaved as a signal peptide. Ig-like V-type domains follow at residues 35–132 (QITI…EIVS), 166–259 (SEGG…VQLY), 270–378 (PLQV…LHVN), 392–498 (RLSI…LQLD), 509–615 (QVKI…LHVN), 642–733 (GESV…VQLQ), and 746–851 (DQLI…VQVH). N-linked (GlcNAc...) asparagine glycans are attached at residues Asn57, Asn103, Asn110, Asn207, Asn224, Asn341, Asn461, Asn472, Asn578, Asn698, Asn709, Asn816, and Asn823. The Ig-like C2-type 1 domain occupies 859 to 943 (PFVRVTDTTV…SKSSLPVRLA (85 aa)). Cys878 and Cys926 are disulfide-bonded.

It belongs to the immunoglobulin superfamily. CEA family. Homodimer.

The protein resides in the cell membrane. It localises to the apical cell membrane. It is found in the cell surface. In terms of biological role, cell surface glycoprotein that plays a role in cell adhesion, intracellular signaling and tumor progression. Mediates homophilic and heterophilic cell adhesion with other carcinoembryonic antigen-related cell adhesion molecules, such as CEACAM6. Plays a role as an oncogene by promoting tumor progression; induces resistance to anoikis of colorectal carcinoma cells. This Mus musculus (Mouse) protein is Cell adhesion molecule CEACAM5.